Consider the following 572-residue polypeptide: Cell cycle protein kinase DBF2 (572 aa).

A phosphoserine mark is found at serine 17, serine 20, and serine 74. A Protein kinase domain is found at 177–477; that stretch reads FEMITQVGQG…FEHVKRMSYF (301 aa). ATP contacts are provided by residues 183–191 and lysine 206; that span reads VGQGGYGQV. The active-site Proton acceptor is the aspartate 300. Serine 374 bears the Phosphoserine; by CDC15 mark. The 78-residue stretch at 478–555 folds into the AGC-kinase C-terminal domain; sequence ADINFSTLRS…RHRNGKQGSS (78 aa). Threonine 544 is modified (phosphothreonine; by CDC15).

It belongs to the protein kinase superfamily. Ser/Thr protein kinase family. Interacts with MOB1. MOB1-binding is required for a late mitotic event. Post-translationally, phosphorylation of Ser-374 and Thr-544 by CDC15 is essential for activation of DBF2 kinase activity.

Its subcellular location is the cytoplasm. The protein localises to the cytoskeleton. The protein resides in the microtubule organizing center. It localises to the spindle pole body. It is found in the bud neck. Its subcellular location is the nucleus. The enzyme catalyses L-seryl-[protein] + ATP = O-phospho-L-seryl-[protein] + ADP + H(+). It catalyses the reaction L-threonyl-[protein] + ATP = O-phospho-L-threonyl-[protein] + ADP + H(+). Its activity is regulated as follows. Kinase activity is regulated by BUB2, CDC15 and CDC5, and is maximal during nuclear division. CDK1 kinase inhibits cellular DBF2-MOB1 kinase activity via phosphorylation of both CDC15 and MOB1. Its function is as follows. Ser/Thr-protein kinase involved in the mitotic exit network (MEN) and required after the metaphase to anaphase cell cycle transition. Phosphorylates CHS2 to regulate its dynamics and chitin synthesis at the division site during cytokinesis. Coordinates septin and actomyosin ring (AMR) functions during cytokinesis through the phosphorylation of HOF1. In complex with MOB1, phosphorylates CDC14 at sites adjacent to its nuclear localization sequence, thereby retaining CDC14 in the cytoplasm. Also binds to SWI5 and CLB2 mRNAs cotranscriptionally to regulate their decay. In the nucleus, the DBF2-MOB1 complex regulates passenger protein localization during anaphase. Mediates sorbic acid stress tolerance through promoting vacuolar H(+)-ATPase function, probably through phosphorylation of VMA1 and VMA2 subunits. The polypeptide is Cell cycle protein kinase DBF2 (DBF2) (Saccharomyces cerevisiae (strain ATCC 204508 / S288c) (Baker's yeast)).